A 472-amino-acid chain; its full sequence is Glutamate-1-semialdehyde 2,1-aminomutase 2, chloroplastic (472 aa).

Residues 1–36 (MAATLTGSGIALGFSCSAKFSKRASSSSNRRCIKMS) constitute a chloroplast transit peptide. An N6-(pyridoxal phosphate)lysine modification is found at Lys-312.

It belongs to the class-III pyridoxal-phosphate-dependent aminotransferase family. HemL subfamily. As to quaternary structure, homodimer. Pyridoxal 5'-phosphate serves as cofactor. Expressed in leaf primordia and shoot apical meristems (SAM).

Its subcellular location is the plastid. It is found in the chloroplast. It carries out the reaction (S)-4-amino-5-oxopentanoate = 5-aminolevulinate. It functions in the pathway porphyrin-containing compound metabolism; protoporphyrin-IX biosynthesis; 5-aminolevulinate from L-glutamyl-tRNA(Glu): step 2/2. Its pathway is porphyrin-containing compound metabolism; chlorophyll biosynthesis. Functionally, transaminase converting glutamate 1-semialdehyde (GSA) to 5-aminolevulinate (ALA). Involved in the biosynthesis of tetrapyrroles. The chain is Glutamate-1-semialdehyde 2,1-aminomutase 2, chloroplastic from Arabidopsis thaliana (Mouse-ear cress).